A 130-amino-acid chain; its full sequence is MYIGICICVLLAALSASSTGQQTVGSMNEDPGAREIEQQNILQHPRHIRASSSAQLKPFQRIDGTSDQKAVIGAMLAKYLQTRKAGSSTGRYAVLPNRPVIDPTHRINDRDYMGWMDFGRRSAEEYEYSS.

Residues 1–20 form the signal peptide; that stretch reads MYIGICICVLLAALSASSTG. The propeptide occupies 21-60; sequence QQTVGSMNEDPGAREIEQQNILQHPRHIRASSSAQLKPFQ. Residue Tyr112 is modified to Sulfotyrosine. Phe118 carries the phenylalanine amide modification. Residues 122–130 constitute a propeptide that is removed on maturation; the sequence is SAEEYEYSS. Tyr126 and Tyr128 each carry sulfotyrosine.

Belongs to the gastrin/cholecystokinin family. The precursor is cleaved by proteases to produce a number of active cholecystokinins. Expressed in brain, lung, testis and throughout the length of the small intestine. In the brain, expressed predominantly in the optic tectum and brain stem.

It localises to the secreted. In terms of biological role, this peptide hormone induces gall bladder contraction and the release of pancreatic enzymes in the gut. Its function in the brain is not clear. This Aquarana catesbeiana (American bullfrog) protein is Cholecystokinin (CCK).